A 324-amino-acid polypeptide reads, in one-letter code: Heat-inducible transcription repressor HrcA (324 aa).

This sequence belongs to the HrcA family.

In terms of biological role, negative regulator of class I heat shock genes (grpE-dnaK-dnaJ and groELS operons). Prevents heat-shock induction of these operons. The polypeptide is Heat-inducible transcription repressor HrcA (Parasynechococcus marenigrum (strain WH8102)).